Consider the following 488-residue polypeptide: MNLTEICDNAKKGREYALLGNYDSSMVYYQGVIQQIHKHCQSLRDPAQKVKWQQVRQELAEEYEQVKSIVSTLESFKVDKAVDFPNPVPEEGPRDPDVWPPPTPAEHRGPVQVKKPVPLSKPQRKESPGMQHRGAVGRGQANIKPDRPNTRDGRGNKAKEEKSKRNAQEGAADVEQKKFDGTGYDSDLVDALERDIVSRNPNIHWDDIADLEDAKKLLREAVVLPMWMPDFFKGIRRPWKGVLMVGPPGTGKTMLAKAVATECGTTFFNVSSSTLTSKYRGESEKLVRLLFEMARFYAPTTIFIDEIDSICGRRGTSDEHEASRRVKSELLVQMDGVGGAQESEDPSKMVMVLAATNFPWDIDEALRRRLEKRIYIPLPTAKGRAELLKINLREVDVASDVDLTVFAEKIEGYSGADITNVCRDASMMAMRRRIQGLSPEEIRALSKDELQMPVTMEDFELALKKISKSVSAADLEKYESWMSEFGSV.

The disordered stretch occupies residues 84–184 (FPNPVPEEGP…EQKKFDGTGY (101 aa)). Basic and acidic residues predominate over residues 144–167 (KPDRPNTRDGRGNKAKEEKSKRNA). An ATP-binding site is contributed by 246–253 (GPPGTGKT).

The protein belongs to the AAA ATPase family. Katanin p60 subunit A1 subfamily. A-like 1 sub-subfamily.

The protein localises to the cytoplasm. Its subcellular location is the cytoskeleton. It is found in the spindle pole. The protein resides in the spindle. It catalyses the reaction n ATP + n H2O + a microtubule = n ADP + n phosphate + (n+1) alpha/beta tubulin heterodimers.. Its function is as follows. Regulates microtubule dynamics in Sertoli cells, a process that is essential for spermiogenesis and male fertility. Severs microtubules in an ATP-dependent manner, promoting rapid reorganization of cellular microtubule arrays. The sequence is that of Katanin p60 ATPase-containing subunit A-like 1 (katnal1) from Danio rerio (Zebrafish).